Reading from the N-terminus, the 506-residue chain is tRNA (guanine(6)-N(2))-methyltransferase THUMP3 (506 aa).

The tract at residues 144 to 172 (KTKRRKLNPNSSKQKIDNGRGDTTVEKDV) is disordered. A compositionally biased stretch (basic and acidic residues) spans 157–172 (QKIDNGRGDTTVEKDV). The region spanning 170 to 286 (KDVKKELTNS…DNEVVVGIAL (117 aa)) is the THUMP domain.

Belongs to the methyltransferase superfamily. In terms of assembly, part of the heterodimeric THUMPD3-TRM112 methyltransferase complex; this complex forms an active tRNA methyltransferase, where TRMT112 acts as an activator of the catalytic subunit THUMPD3.

Its subcellular location is the cytoplasm. It carries out the reaction guanosine(6) in tRNA + S-adenosyl-L-methionine = N(2)-methylguanosine(6) in tRNA + S-adenosyl-L-homocysteine + H(+). The catalysed reaction is guanosine(7) in tRNA + S-adenosyl-L-methionine = N(2)-methylguanosine(7) in tRNA + S-adenosyl-L-homocysteine + H(+). In terms of biological role, catalytic subunit of the THUMPD3-TRM112 methyltransferase complex, that specifically mediates the S-adenosyl-L-methionine-dependent N(2)-methylation of guanosine nucleotide at position 6 (m2G6) in tRNAs. This is one of the major tRNA (guanine-N(2))-methyltransferases. Also catalyzes the S-adenosyl-L-methionine-dependent N(2)-methylation of guanosine nucleotide at position 7 of tRNA(Trp). The chain is tRNA (guanine(6)-N(2))-methyltransferase THUMP3 from Bos taurus (Bovine).